The following is a 399-amino-acid chain: F420-dependent formate dehydrogenase subunit beta (399 aa).

2 4Fe-4S ferredoxin-type domains span residues 287 to 307 and 339 to 367; these read TEYMDDFSRCLKCYGCREACP and ERMLHMVESCTNCGQCEEVCPGEIPLAKI. 8 residues coordinate [4Fe-4S] cluster: C296, C299, C302, C306, C348, C351, C354, and C358.

The protein belongs to the FrhB family. In terms of assembly, dimer of an alpha (FdhA) and a beta (FdhB) subunit. The cofactor is [4Fe-4S] cluster. FAD is required as a cofactor. Zn(2+) serves as cofactor.

The catalysed reaction is oxidized coenzyme F420-(gamma-L-Glu)(n) + formate + 2 H(+) = reduced coenzyme F420-(gamma-L-Glu)(n) + CO2. Is extremely sensitive to oxygen. Contains a FAD that is required for coenzyme F420-dependent activity but not for methyl viologen-dependent activity. Preincubation of the FAD-depleted enzyme with FAD restores coenzyme F420-dependent activity. Neither FMN nor FADH2 can replace FAD. Strongly inhibited by cyanide, azide, alpha,alpha-dipyridyl and 1,10-phenanthroline. Functionally, catalyzes the oxidation of formate to carbon dioxide, with coenzyme F420 as the electron acceptor. In vitro can also use methyl viologen, 7,8-didemethyl-8-hydroxy-5-deazariboflavin (or FO, a hydrolytic derivative of coenzyme F420), FMN and FAD as electron acceptors, but not NAD(+) or NADP(+). The protein is F420-dependent formate dehydrogenase subunit beta of Methanobacterium formicicum.